We begin with the raw amino-acid sequence, 63 residues long: Bowman-birk type proteinase inhibitor 2 (63 aa).

Cystine bridges form between cysteine 7–cysteine 61, cysteine 8–cysteine 23, cysteine 11–cysteine 57, cysteine 13–cysteine 21, cysteine 31–cysteine 38, cysteine 35–cysteine 50, and cysteine 40–cysteine 48.

This sequence belongs to the Bowman-Birk serine protease inhibitor family. Exists as a dimer in its native form.

Functionally, inhibits trypsin, chymotrypsin, plasmin and factor XIIa. Does not inhibit factor Xa, thrombin, human plasma kallikrein, porcine pancreatic kallikrein and human urinary kallikrein. This chain is Bowman-birk type proteinase inhibitor 2, found in Amburana cearensis (Cerejeira).